Consider the following 118-residue polypeptide: Small ribosomal subunit protein uS13 (118 aa).

Positions 94–118 are disordered; sequence SLPLRGQRTKTNARTRKGPRKPIKK.

It belongs to the universal ribosomal protein uS13 family. Part of the 30S ribosomal subunit. Forms a loose heterodimer with protein S19. Forms two bridges to the 50S subunit in the 70S ribosome.

Its function is as follows. Located at the top of the head of the 30S subunit, it contacts several helices of the 16S rRNA. In the 70S ribosome it contacts the 23S rRNA (bridge B1a) and protein L5 of the 50S subunit (bridge B1b), connecting the 2 subunits; these bridges are implicated in subunit movement. Contacts the tRNAs in the A and P-sites. The chain is Small ribosomal subunit protein uS13 from Vibrio cholerae serotype O1 (strain ATCC 39315 / El Tor Inaba N16961).